The sequence spans 222 residues: Methionine import system permease protein MetP (222 aa).

The 195-residue stretch at Thr-18 to Gly-212 folds into the ABC transmembrane type-1 domain. Helical transmembrane passes span Thr-25–Leu-45, Phe-73–Gly-93, Ala-97–Leu-117, Ile-152–Ile-172, and Phe-195–Ile-215.

This sequence belongs to the binding-protein-dependent transport system permease family. CysTW subfamily. As to quaternary structure, the complex is composed of two ATP-binding proteins (MetN), two transmembrane proteins (MetP) and a solute-binding protein (MetQ).

It is found in the cell membrane. Its function is as follows. Part of the ABC transporter complex MetNPQ involved in methionine import. Responsible for the translocation of the substrate across the membrane. It has also been shown to be involved in methionine sulfoxide transport. The sequence is that of Methionine import system permease protein MetP (metP) from Bacillus subtilis (strain 168).